Here is a 295-residue protein sequence, read N- to C-terminus: 33 kDa chaperonin (295 aa).

Disulfide bonds link Cys-237/Cys-239 and Cys-270/Cys-273.

It belongs to the HSP33 family. In terms of processing, under oxidizing conditions two disulfide bonds are formed involving the reactive cysteines. Under reducing conditions zinc is bound to the reactive cysteines and the protein is inactive.

Its subcellular location is the cytoplasm. In terms of biological role, redox regulated molecular chaperone. Protects both thermally unfolding and oxidatively damaged proteins from irreversible aggregation. Plays an important role in the bacterial defense system toward oxidative stress. The protein is 33 kDa chaperonin of Symbiobacterium thermophilum (strain DSM 24528 / JCM 14929 / IAM 14863 / T).